Reading from the N-terminus, the 294-residue chain is Indole-3-glycerol phosphate synthase (294 aa).

This sequence belongs to the TrpC family.

It catalyses the reaction 1-(2-carboxyphenylamino)-1-deoxy-D-ribulose 5-phosphate + H(+) = (1S,2R)-1-C-(indol-3-yl)glycerol 3-phosphate + CO2 + H2O. The protein operates within amino-acid biosynthesis; L-tryptophan biosynthesis; L-tryptophan from chorismate: step 4/5. In Synechococcus sp. (strain CC9902), this protein is Indole-3-glycerol phosphate synthase.